The primary structure comprises 338 residues: Ribosomal RNA small subunit methyltransferase H (338 aa).

Residues 46 to 48, Asp-63, Phe-90, Asp-106, and Gln-113 contribute to the S-adenosyl-L-methionine site; that span reads GGY.

This sequence belongs to the methyltransferase superfamily. RsmH family.

The protein resides in the cytoplasm. It carries out the reaction cytidine(1402) in 16S rRNA + S-adenosyl-L-methionine = N(4)-methylcytidine(1402) in 16S rRNA + S-adenosyl-L-homocysteine + H(+). Functionally, specifically methylates the N4 position of cytidine in position 1402 (C1402) of 16S rRNA. In Mesorhizobium japonicum (strain LMG 29417 / CECT 9101 / MAFF 303099) (Mesorhizobium loti (strain MAFF 303099)), this protein is Ribosomal RNA small subunit methyltransferase H.